Here is a 1059-residue protein sequence, read N- to C-terminus: Carbamoyl phosphate synthase large chain (1059 aa).

Positions 1–401 are carboxyphosphate synthetic domain; that stretch reads MPKRTDIHKI…ALLKAVASLE (401 aa). ATP-binding residues include R129, R169, G175, G176, K208, I210, E215, G241, I242, H243, Q284, and E298. The ATP-grasp 1 domain maps to 133–327; the sequence is KELMQELGEP…IAKLAAKIAV (195 aa). The Mg(2+) site is built by Q284, E298, and N300. Mn(2+) is bound by residues Q284, E298, and N300. The interval 402–546 is oligomerization domain; it reads IDQKDLLSKE…YSTYETENES (145 aa). Residues 547 to 929 are carbamoyl phosphate synthetic domain; sequence RRSAKPSVLV…ALYKAFAGAG (383 aa). The ATP-grasp 2 domain maps to 671-861; sequence DQVIKDLNLR…MAQLATKVIL (191 aa). ATP is bound by residues R707, A746, L748, E752, G777, V778, H779, S780, Q820, and E832. Mg(2+) contacts are provided by Q820, E832, and N834. 3 residues coordinate Mn(2+): Q820, E832, and N834. The MGS-like domain occupies 930 to 1059; sequence MEVPDNGAVL…EMTSFKTTEL (130 aa). The tract at residues 930–1059 is allosteric domain; the sequence is MEVPDNGAVL…EMTSFKTTEL (130 aa).

Belongs to the CarB family. Composed of two chains; the small (or glutamine) chain promotes the hydrolysis of glutamine to ammonia, which is used by the large (or ammonia) chain to synthesize carbamoyl phosphate. Tetramer of heterodimers (alpha,beta)4. The cofactor is Mg(2+). It depends on Mn(2+) as a cofactor.

It catalyses the reaction hydrogencarbonate + L-glutamine + 2 ATP + H2O = carbamoyl phosphate + L-glutamate + 2 ADP + phosphate + 2 H(+). The enzyme catalyses hydrogencarbonate + NH4(+) + 2 ATP = carbamoyl phosphate + 2 ADP + phosphate + 2 H(+). It participates in amino-acid biosynthesis; L-arginine biosynthesis; carbamoyl phosphate from bicarbonate: step 1/1. It functions in the pathway pyrimidine metabolism; UMP biosynthesis via de novo pathway; (S)-dihydroorotate from bicarbonate: step 1/3. Large subunit of the glutamine-dependent carbamoyl phosphate synthetase (CPSase). CPSase catalyzes the formation of carbamoyl phosphate from the ammonia moiety of glutamine, carbonate, and phosphate donated by ATP, constituting the first step of 2 biosynthetic pathways, one leading to arginine and/or urea and the other to pyrimidine nucleotides. The large subunit (synthetase) binds the substrates ammonia (free or transferred from glutamine from the small subunit), hydrogencarbonate and ATP and carries out an ATP-coupled ligase reaction, activating hydrogencarbonate by forming carboxy phosphate which reacts with ammonia to form carbamoyl phosphate. This is Carbamoyl phosphate synthase large chain from Limosilactobacillus fermentum (strain NBRC 3956 / LMG 18251) (Lactobacillus fermentum).